The chain runs to 61 residues: Large ribosomal subunit protein bL32 (61 aa).

Basic residues predominate over residues 1–16 (MAVPKRKTSPSKRGMR). The disordered stretch occupies residues 1–61 (MAVPKRKTSP…RSVLTPKNSG (61 aa)). Positions 28 to 44 (VEDKDSGELRRPHHIDL) are enriched in basic and acidic residues.

This sequence belongs to the bacterial ribosomal protein bL32 family.

The sequence is that of Large ribosomal subunit protein bL32 from Bartonella bacilliformis (strain ATCC 35685 / KC583 / Herrer 020/F12,63).